Here is a 1150-residue protein sequence, read N- to C-terminus: Protogenin (1150 aa).

The first 35 residues, 1-35, serve as a signal peptide directing secretion; sequence MAPPLRPLARLRPPGMLLRALLLLLLLSPLPGVWC. Ig-like domains lie at 36-130, 135-222, 235-322, and 327-411; these read FSEL…AHLA, SAFE…ASLT, PTII…ATLT, and PSFV…ARLT. The Extracellular portion of the chain corresponds to 36-949; it reads FSELSFVKEP…YYHLDQKSMT (914 aa). Disulfide bonds link Cys-60–Cys-113, Cys-156–Cys-205, Cys-256–Cys-304, and Cys-348–Cys-395. A glycan (N-linked (GlcNAc...) asparagine) is linked at Asn-90. 5 Fibronectin type-III domains span residues 421-515, 517-613, 618-717, 724-817, and 822-917; these read APYN…TLED, PLRP…TPKA, APKS…VRDR, PPHH…TLPE, and PPVG…VLPK. Asn-488 carries N-linked (GlcNAc...) asparagine glycosylation. Asn-630 is a glycosylation site (N-linked (GlcNAc...) asparagine). The helical transmembrane segment at 950-970 threads the bilayer; sequence GIAVGVGIALTCILICVLILI. Topologically, residues 971–1150 are cytoplasmic; the sequence is YRSKARKSSA…SVISTTPPNL (180 aa). 2 disordered regions span residues 981 to 1002 and 1086 to 1150; these read SKTA…ASGN and ISDE…PPNL. Composition is skewed to polar residues over residues 983 to 1000 and 1092 to 1102; these read TAQN…SLAS and PSSPGQTTSFS. Over residues 1110–1138 the composition is skewed to basic and acidic residues; that stretch reads DTEHSANSEGSHETGDSGRFSHESNDEIH. A compositionally biased stretch (polar residues) spans 1141 to 1150; that stretch reads SVISTTPPNL.

This sequence belongs to the immunoglobulin superfamily. DCC family.

Its subcellular location is the membrane. Its function is as follows. May play a role in anteroposterior axis elongation. The polypeptide is Protogenin (Homo sapiens (Human)).